Consider the following 80-residue polypeptide: Defensin-like protein 17 (80 aa).

Positions 1–29 are cleaved as a signal peptide; the sequence is MAKSATIITFLFAALVLFAAFEAPTMVEA. A Pyrrolidone carboxylic acid modification is found at Q30. 4 cysteine pairs are disulfide-bonded: C33-C80, C44-C65, C50-C74, and C54-C76.

Belongs to the DEFL family.

It is found in the secreted. Confers broad-spectrum resistance to pathogens. The sequence is that of Defensin-like protein 17 (PDF1.2C) from Arabidopsis thaliana (Mouse-ear cress).